The following is a 438-amino-acid chain: Terminase, large subunit (438 aa).

A Walker A motif motif is present at residues 62-68 (SRRVGKS). The Walker B motif signature appears at 150 to 155 (FIIFDE). The For ATPase activity role is filled by Glu-155. Residues Asp-286, Asp-342, and Asp-418 each coordinate Mg(2+).

The protein belongs to the Tequatrovirus large terminase family. As to quaternary structure, interacts with the terminase small subunit; the active complex is probably heterooligomeric. Interacts with the portal protein. Mg(2+) is required as a cofactor.

The terminase large subunit acts as an ATP driven molecular motor necessary for viral DNA translocation into empty capsids and as an endonuclease that cuts the viral genome to initiate and to end a packaging reaction The terminase lies at a unique vertex of the procapsid and is composed of two subunits, a small terminase subunit involved in viral DNA recognition (packaging sequence), and a large terminase subunit possessing endonucleolytic and ATPase activities. Both terminase subunits heterooligomerize and are docked on the portal protein to form the packaging machine. The terminase large subunit exhibits endonuclease activity and cleaves the viral genome concatemer. Direct long terminal repeats at each end of the genome are duplicated in concert with packaging. Once the capsid is packaged with the DNA, the terminase complex is substituted by the tail. This is Terminase, large subunit from Escherichia phage T5 (Enterobacteria phage T5).